The following is a 192-amino-acid chain: ADP-ribosylation factor-like protein 4C (192 aa).

The N-myristoyl glycine moiety is linked to residue glycine 2. GTP contacts are provided by residues 20-27 (GLDSAGKT), 68-72 (DVGGQ), and 127-130 (NKQD).

The protein belongs to the small GTPase superfamily. Arf family. In terms of assembly, interacts with CYTH2. Interacts with alpha tubulin; interaction is independent on the ARL4C GTP or GDP binding status. Expressed in several tumor cell lines (at protein level). Expressed in lung, brain, leukocytes and placenta.

The protein resides in the cell projection. It localises to the filopodium. Its subcellular location is the cell membrane. The protein localises to the cytoplasm. Small GTP-binding protein which cycles between an inactive GDP-bound and an active GTP-bound form, and the rate of cycling is regulated by guanine nucleotide exchange factors (GEF) and GTPase-activating proteins (GAP). GTP-binding protein that does not act as an allosteric activator of the cholera toxin catalytic subunit. May be involved in transport between a perinuclear compartment and the plasma membrane, apparently linked to the ABCA1-mediated cholesterol secretion pathway. Recruits CYTH1, CYTH2, CYTH3 and CYTH4 to the plasma membrane in the GDP-bound form. Regulates the microtubule-dependent intracellular vesicular transport from early endosome to recycling endosome process. The chain is ADP-ribosylation factor-like protein 4C (ARL4C) from Homo sapiens (Human).